Here is a 255-residue protein sequence, read N- to C-terminus: Increased copper sensitivity protein 2 (255 aa).

The segment covering 1 to 12 (MGKFEQKERERI) has biased composition (basic and acidic residues). Disordered regions lie at residues 1 to 32 (MGKFEQKERERISTFSFPTTGSQSSTSIKSLG) and 82 to 142 (PGDK…RKSH). Over residues 13–30 (STFSFPTTGSQSSTSIKS) the composition is skewed to polar residues. Over residues 131 to 142 (SGRRKSYHRKSH) the composition is skewed to basic residues. Serine 217 carries the phosphoserine modification.

This chain is Increased copper sensitivity protein 2 (ICS2), found in Saccharomyces cerevisiae (strain ATCC 204508 / S288c) (Baker's yeast).